A 381-amino-acid polypeptide reads, in one-letter code: Outer membrane protein assembly factor BamB (381 aa).

The signal sequence occupies residues 1-22; the sequence is MNLLKRYAAPVACAAAVLVFAA. The N-palmitoyl cysteine moiety is linked to residue Cys-23. Cys-23 carries the S-diacylglycerol cysteine lipid modification.

Belongs to the BamB family. As to quaternary structure, part of the Bam complex.

The protein localises to the cell outer membrane. Part of the outer membrane protein assembly complex, which is involved in assembly and insertion of beta-barrel proteins into the outer membrane. This chain is Outer membrane protein assembly factor BamB, found in Burkholderia pseudomallei (strain K96243).